A 304-amino-acid polypeptide reads, in one-letter code: Acetyl-coenzyme A carboxylase carboxyl transferase subunit beta (304 aa).

Residues 23–292 form the CoA carboxyltransferase N-terminal domain; it reads VWTKCDSCGQ…PNPEAPREGV (270 aa). Zn(2+) contacts are provided by cysteine 27, cysteine 30, cysteine 46, and cysteine 49. Residues 27–49 form a C4-type zinc finger; it reads CDSCGQVLYRAELERNLEVCPKC. Positions 284–304 are disordered; that stretch reads NPEAPREGVVVPPVPDQEPEA. Pro residues predominate over residues 295–304; it reads PPVPDQEPEA.

It belongs to the AccD/PCCB family. Acetyl-CoA carboxylase is a heterohexamer composed of biotin carboxyl carrier protein (AccB), biotin carboxylase (AccC) and two subunits each of ACCase subunit alpha (AccA) and ACCase subunit beta (AccD). Zn(2+) is required as a cofactor.

It is found in the cytoplasm. It carries out the reaction N(6)-carboxybiotinyl-L-lysyl-[protein] + acetyl-CoA = N(6)-biotinyl-L-lysyl-[protein] + malonyl-CoA. Its pathway is lipid metabolism; malonyl-CoA biosynthesis; malonyl-CoA from acetyl-CoA: step 1/1. Functionally, component of the acetyl coenzyme A carboxylase (ACC) complex. Biotin carboxylase (BC) catalyzes the carboxylation of biotin on its carrier protein (BCCP) and then the CO(2) group is transferred by the transcarboxylase to acetyl-CoA to form malonyl-CoA. The polypeptide is Acetyl-coenzyme A carboxylase carboxyl transferase subunit beta (Escherichia coli O139:H28 (strain E24377A / ETEC)).